A 165-amino-acid polypeptide reads, in one-letter code: MLKPEMIEKLNEQMNLELYSSLLYQQMSAWCSYHTFEGAAAFLRRHAQEEMTHMQRLFDYLTDTGNLPRINTVESPFAEYSSLDELFQETYKHEQLITQKINELAHAAMTNQDYPTFNFLQWYVSEQHEEEKLFKSIIDKLSLAGKSGEGLYFIDKELSTLDTQN.

The region spanning 1-145 is the Ferritin-like diiron domain; sequence MLKPEMIEKL…SIIDKLSLAG (145 aa). Fe cation contacts are provided by glutamate 17, glutamate 49, glutamate 50, histidine 53, glutamate 94, glutamate 126, glutamine 127, and glutamate 130.

The protein belongs to the ferritin family. Prokaryotic subfamily. As to quaternary structure, homooligomer of 24 subunits that assemble into a spherical protein shell (12 +/- 1 nM diameter) that can sequester at least 2000 iron atoms.

It is found in the cytoplasm. It catalyses the reaction 4 Fe(2+) + O2 + 6 H2O = 4 iron(III) oxide-hydroxide + 12 H(+). In terms of biological role, iron-storage protein. In Escherichia coli O157:H7, this protein is Bacterial non-heme ferritin (ftnA).